The primary structure comprises 167 residues: Lipoprotein signal peptidase (167 aa).

3 helical membrane passes run 10-30 (LIWL…KAWV), 68-88 (WQMW…TFWL), and 98-118 (SALP…DRFL). Catalysis depends on residues Asp-124 and Asp-142. The chain crosses the membrane as a helical span at residues 138 to 158 (FNLADSAIVAGAIGIGLLSLF).

It belongs to the peptidase A8 family.

The protein localises to the cell inner membrane. The catalysed reaction is Release of signal peptides from bacterial membrane prolipoproteins. Hydrolyzes -Xaa-Yaa-Zaa-|-(S,diacylglyceryl)Cys-, in which Xaa is hydrophobic (preferably Leu), and Yaa (Ala or Ser) and Zaa (Gly or Ala) have small, neutral side chains.. It functions in the pathway protein modification; lipoprotein biosynthesis (signal peptide cleavage). This protein specifically catalyzes the removal of signal peptides from prolipoproteins. The polypeptide is Lipoprotein signal peptidase (Xylella fastidiosa (strain 9a5c)).